A 396-amino-acid chain; its full sequence is Putative isochorismate synthase (396 aa).

It belongs to the isochorismate synthase family.

It catalyses the reaction chorismate = isochorismate. It participates in siderophore biosynthesis; amonabactin biosynthesis. Its function is as follows. Involved in the synthesis of amonabactin, a phenolate siderophore containing 2,3-dihydroxybenzoic acid (2,3-DHB). This is Putative isochorismate synthase (amoA) from Aeromonas hydrophila.